We begin with the raw amino-acid sequence, 902 residues long: DNA mismatch repair protein MutS (902 aa).

An ATP-binding site is contributed by 647 to 654; that stretch reads GPNMGGKS.

It belongs to the DNA mismatch repair MutS family.

Functionally, this protein is involved in the repair of mismatches in DNA. It is possible that it carries out the mismatch recognition step. This protein has a weak ATPase activity. The protein is DNA mismatch repair protein MutS of Nitrosospira multiformis (strain ATCC 25196 / NCIMB 11849 / C 71).